A 349-amino-acid chain; its full sequence is Protein POOR HOMOLOGOUS SYNAPSIS 1 (349 aa).

Its subcellular location is the cytoplasm. Functionally, required for accurate chromosome segregation in meiosis. Required for pairing to occur between homologous chromosomes. Acts in early recombination steps and ensures pairing fidelity and proper repair of meiotic DNA double-strand-breaks. Regulates recombination and pairing of homologous chromosomes during meiotic prophase by controlling transport of RAD50 from cytoplasm to the nucleus. May affect pairing of the gene-rich fraction of the genome rather than preventing pairing between repetitive DNA elements. The protein is Protein POOR HOMOLOGOUS SYNAPSIS 1 of Arabidopsis thaliana (Mouse-ear cress).